The following is a 394-amino-acid chain: Putative gustatory receptor 22a (394 aa).

Residues 1–16 (MSQPKRIHRICKGLAR) are Cytoplasmic-facing. Residues 17–37 (FTIRATLYGSWVLGLFPFTFD) form a helical membrane-spanning segment. Topologically, residues 38-47 (SRKRRLNRSK) are extracellular. N-linked (GlcNAc...) asparagine glycosylation is present at Asn44. The helical transmembrane segment at 48-68 (WLLAYGLVLNLTLLVLSMLPS) threads the bilayer. The Cytoplasmic segment spans residues 69–148 (TDDHNSVKVE…HTFNRYVIEK (80 aa)). Residues 149–169 (GLVIILEIGSSLVLYFGIPNS) form a helical membrane-spanning segment. Residue Lys170 is a topological domain, extracellular. A helical membrane pass occupies residues 171 to 191 (IVVYEAVCIYIVQLEVLMVVM). The Cytoplasmic segment spans residues 192 to 256 (HFHLAVIYIY…TAIYDIQVTL (65 aa)). Residues 257–277 (FMATLFSVNIIVGHVLVICWI) form a helical membrane-spanning segment. N-linked (GlcNAc...) asparagine glycosylation occurs at Asn278. At 278–281 (NITR) the chain is on the extracellular side. A helical transmembrane segment spans residues 282–302 (FSLLVIFLLFPQALIINFWDL). At 303 to 361 (WQGIAFCDLAESTGKKTSMILKLFNDMENMDQETERRVTEFTLFCSHRRLKVCHLGLLD) the chain is on the cytoplasmic side. Residues 362–382 (INYEMGFRMIITNILYVVFLV) form a helical membrane-spanning segment. Topologically, residues 383 to 394 (QFDYMNLKFKTD) are extracellular.

Belongs to the insect chemoreceptor superfamily. Gustatory receptor (GR) family. Gr22e subfamily. Expressed in neurons of the terminal external chemosensory organ of larvae.

It is found in the cell membrane. Probable gustatory receptor which mediates acceptance or avoidance behavior, depending on its substrates. The polypeptide is Putative gustatory receptor 22a (Gr22a) (Drosophila melanogaster (Fruit fly)).